The chain runs to 210 residues: Thymidylate kinase (210 aa).

10-17 contacts ATP; it reads GPEGAGKS.

It belongs to the thymidylate kinase family.

The enzyme catalyses dTMP + ATP = dTDP + ADP. In terms of biological role, phosphorylation of dTMP to form dTDP in both de novo and salvage pathways of dTTP synthesis. The polypeptide is Thymidylate kinase (Pseudomonas fluorescens (strain SBW25)).